The chain runs to 604 residues: Aspartate--tRNA(Asp/Asn) ligase (604 aa).

Glu175 contacts L-aspartate. The segment at 199–202 (QQFK) is aspartate. Residues Arg221 and His456 each contribute to the L-aspartate site. 221-223 (RDE) lines the ATP pocket. Position 496 (Glu496) interacts with ATP. Position 503 (Arg503) interacts with L-aspartate. ATP is bound at residue 548 to 551 (GVDR).

It belongs to the class-II aminoacyl-tRNA synthetase family. Type 1 subfamily. In terms of assembly, homodimer.

It localises to the cytoplasm. It catalyses the reaction tRNA(Asx) + L-aspartate + ATP = L-aspartyl-tRNA(Asx) + AMP + diphosphate. Functionally, aspartyl-tRNA synthetase with relaxed tRNA specificity since it is able to aspartylate not only its cognate tRNA(Asp) but also tRNA(Asn). Reaction proceeds in two steps: L-aspartate is first activated by ATP to form Asp-AMP and then transferred to the acceptor end of tRNA(Asp/Asn). The sequence is that of Aspartate--tRNA(Asp/Asn) ligase from Methylobacterium sp. (strain 4-46).